Reading from the N-terminus, the 343-residue chain is Heat-inducible transcription repressor HrcA (343 aa).

The protein belongs to the HrcA family.

Functionally, negative regulator of class I heat shock genes (grpE-dnaK-dnaJ and groELS operons). Prevents heat-shock induction of these operons. The polypeptide is Heat-inducible transcription repressor HrcA (Mycoplasma genitalium (strain ATCC 33530 / DSM 19775 / NCTC 10195 / G37) (Mycoplasmoides genitalium)).